The sequence spans 124 residues: Putative membrane protein insertion efficiency factor (124 aa).

It belongs to the UPF0161 family.

The protein localises to the cell inner membrane. In terms of biological role, could be involved in insertion of integral membrane proteins into the membrane. The protein is Putative membrane protein insertion efficiency factor of Psychrobacter cryohalolentis (strain ATCC BAA-1226 / DSM 17306 / VKM B-2378 / K5).